The primary structure comprises 241 residues: Ribonuclease 3 (241 aa).

The 129-residue stretch at 16–144 (HAEFEKKINY…VIGAIFQDGG (129 aa)) folds into the RNase III domain. Mg(2+) is bound at residue Glu-57. Active-site residues include Asp-61 and Glu-133. Position 133 (Glu-133) interacts with Mg(2+). A DRBM domain is found at 171–240 (DAKSRLQEIL…AALAIKKIES (70 aa)).

The protein belongs to the ribonuclease III family. In terms of assembly, homodimer. Mg(2+) is required as a cofactor.

It is found in the cytoplasm. The catalysed reaction is Endonucleolytic cleavage to 5'-phosphomonoester.. Digests double-stranded RNA. Involved in the processing of primary rRNA transcript to yield the immediate precursors to the large and small rRNAs (23S and 16S). Processes some mRNAs, and tRNAs when they are encoded in the rRNA operon. Processes pre-crRNA and tracrRNA of type II CRISPR loci if present in the organism. This Desulfotalea psychrophila (strain LSv54 / DSM 12343) protein is Ribonuclease 3.